We begin with the raw amino-acid sequence, 310 residues long: Porphobilinogen deaminase (310 aa).

Cys242 bears the S-(dipyrrolylmethanemethyl)cysteine mark.

This sequence belongs to the HMBS family. As to quaternary structure, monomer. The cofactor is dipyrromethane.

It catalyses the reaction 4 porphobilinogen + H2O = hydroxymethylbilane + 4 NH4(+). The protein operates within porphyrin-containing compound metabolism; protoporphyrin-IX biosynthesis; coproporphyrinogen-III from 5-aminolevulinate: step 2/4. In terms of biological role, tetrapolymerization of the monopyrrole PBG into the hydroxymethylbilane pre-uroporphyrinogen in several discrete steps. The sequence is that of Porphobilinogen deaminase from Shewanella baltica (strain OS155 / ATCC BAA-1091).